The sequence spans 221 residues: ATP synthase subunit delta (221 aa).

Over residues 1–13 the composition is skewed to basic and acidic residues; it reads MGPVPEEHQRESE. The disordered stretch occupies residues 1 to 31; sequence MGPVPEEHQRESETVASNGANESGAAVTGIP.

The protein belongs to the ATPase delta chain family. In terms of assembly, F-type ATPases have 2 components, F(1) - the catalytic core - and F(0) - the membrane proton channel. F(1) has five subunits: alpha(3), beta(3), gamma(1), delta(1), epsilon(1). F(0) has three main subunits: a(1), b(2) and c(10-14). The alpha and beta chains form an alternating ring which encloses part of the gamma chain. F(1) is attached to F(0) by a central stalk formed by the gamma and epsilon chains, while a peripheral stalk is formed by the delta and b chains.

The protein localises to the cell inner membrane. Its function is as follows. F(1)F(0) ATP synthase produces ATP from ADP in the presence of a proton or sodium gradient. F-type ATPases consist of two structural domains, F(1) containing the extramembraneous catalytic core and F(0) containing the membrane proton channel, linked together by a central stalk and a peripheral stalk. During catalysis, ATP synthesis in the catalytic domain of F(1) is coupled via a rotary mechanism of the central stalk subunits to proton translocation. This protein is part of the stalk that links CF(0) to CF(1). It either transmits conformational changes from CF(0) to CF(1) or is implicated in proton conduction. The polypeptide is ATP synthase subunit delta (Granulibacter bethesdensis (strain ATCC BAA-1260 / CGDNIH1)).